The primary structure comprises 616 residues: Dihydroxy-acid dehydratase (616 aa).

D81 provides a ligand contact to Mg(2+). [2Fe-2S] cluster is bound at residue C122. D123 and K124 together coordinate Mg(2+). At K124 the chain carries N6-carboxylysine. A [2Fe-2S] cluster-binding site is contributed by C195. Mg(2+) is bound at residue E491. The active-site Proton acceptor is S517.

It belongs to the IlvD/Edd family. As to quaternary structure, homodimer. It depends on [2Fe-2S] cluster as a cofactor. Mg(2+) is required as a cofactor.

The catalysed reaction is (2R)-2,3-dihydroxy-3-methylbutanoate = 3-methyl-2-oxobutanoate + H2O. It catalyses the reaction (2R,3R)-2,3-dihydroxy-3-methylpentanoate = (S)-3-methyl-2-oxopentanoate + H2O. It functions in the pathway amino-acid biosynthesis; L-isoleucine biosynthesis; L-isoleucine from 2-oxobutanoate: step 3/4. The protein operates within amino-acid biosynthesis; L-valine biosynthesis; L-valine from pyruvate: step 3/4. Functions in the biosynthesis of branched-chain amino acids. Catalyzes the dehydration of (2R,3R)-2,3-dihydroxy-3-methylpentanoate (2,3-dihydroxy-3-methylvalerate) into 2-oxo-3-methylpentanoate (2-oxo-3-methylvalerate) and of (2R)-2,3-dihydroxy-3-methylbutanoate (2,3-dihydroxyisovalerate) into 2-oxo-3-methylbutanoate (2-oxoisovalerate), the penultimate precursor to L-isoleucine and L-valine, respectively. In Escherichia fergusonii (strain ATCC 35469 / DSM 13698 / CCUG 18766 / IAM 14443 / JCM 21226 / LMG 7866 / NBRC 102419 / NCTC 12128 / CDC 0568-73), this protein is Dihydroxy-acid dehydratase.